Reading from the N-terminus, the 374-residue chain is F-box/LRR-repeat protein 8 (374 aa).

The 47-residue stretch at 2–48 (AEPGEGLPEEVLALIFRHLSLRDRAAAARVCRAWAAAATCSAVWHDT) folds into the F-box domain.

Directly interacts with SKP1 and CUL1.

Its function is as follows. Substrate-recognition component of the SCF (SKP1-CUL1-F-box protein)-type E3 ubiquitin ligase complex. The polypeptide is F-box/LRR-repeat protein 8 (FBXL8) (Homo sapiens (Human)).